A 65-amino-acid chain; its full sequence is Large ribosomal subunit protein bL35 (65 aa).

Belongs to the bacterial ribosomal protein bL35 family.

The polypeptide is Large ribosomal subunit protein bL35 (Nitrosomonas eutropha (strain DSM 101675 / C91 / Nm57)).